The chain runs to 115 residues: NADH-ubiquinone oxidoreductase chain 3 (115 aa).

The next 3 membrane-spanning stretches (helical) occupy residues 4–24 (IVIL…AFWL), 55–75 (FFLI…LLPL), and 84–104 (TYFT…GLMY).

The protein belongs to the complex I subunit 3 family. Core subunit of respiratory chain NADH dehydrogenase (Complex I) which is composed of 45 different subunits. Interacts with TMEM186. Interacts with TMEM242.

It is found in the mitochondrion inner membrane. The catalysed reaction is a ubiquinone + NADH + 5 H(+)(in) = a ubiquinol + NAD(+) + 4 H(+)(out). In terms of biological role, core subunit of the mitochondrial membrane respiratory chain NADH dehydrogenase (Complex I) which catalyzes electron transfer from NADH through the respiratory chain, using ubiquinone as an electron acceptor. Essential for the catalytic activity of complex I. The sequence is that of NADH-ubiquinone oxidoreductase chain 3 from Eligmodontia typus (Highland gerbil mouse).